A 256-amino-acid chain; its full sequence is Small ribosomal subunit protein eS1A (256 aa).

A2 carries the post-translational modification N-acetylalanine; partial.

Belongs to the eukaryotic ribosomal protein eS1 family. In terms of assembly, component of the small ribosomal subunit. Mature ribosomes consist of a small (40S) and a large (60S) subunit. The 40S subunit contains about 33 different proteins and 1 molecule of RNA (18S). The 60S subunit contains about 49 different proteins and 3 molecules of RNA (25S, 5.8S and 5S).

It is found in the cytoplasm. The protein is Small ribosomal subunit protein eS1A of Scheffersomyces stipitis (strain ATCC 58785 / CBS 6054 / NBRC 10063 / NRRL Y-11545) (Yeast).